The sequence spans 508 residues: Putative glycosyl hydrolase ecdF (508 aa).

The signal sequence occupies residues 1–15 (MFLHILCLLAGQALA). 4 N-linked (GlcNAc...) asparagine glycosylation sites follow: N99, N122, N275, and N362.

The protein belongs to the glycosyl hydrolase 32 family.

The polypeptide is Putative glycosyl hydrolase ecdF (Aspergillus rugulosus (Emericella rugulosa)).